The primary structure comprises 308 residues: Phosphoribosylaminoimidazole-succinocarboxamide synthase (308 aa).

The protein belongs to the SAICAR synthetase family.

It carries out the reaction 5-amino-1-(5-phospho-D-ribosyl)imidazole-4-carboxylate + L-aspartate + ATP = (2S)-2-[5-amino-1-(5-phospho-beta-D-ribosyl)imidazole-4-carboxamido]succinate + ADP + phosphate + 2 H(+). It participates in purine metabolism; IMP biosynthesis via de novo pathway; 5-amino-1-(5-phospho-D-ribosyl)imidazole-4-carboxamide from 5-amino-1-(5-phospho-D-ribosyl)imidazole-4-carboxylate: step 1/2. The protein is Phosphoribosylaminoimidazole-succinocarboxamide synthase of Xanthomonas oryzae pv. oryzae (strain PXO99A).